Reading from the N-terminus, the 514-residue chain is ATP synthase subunit alpha (514 aa).

170–177 (GDRQIGKT) provides a ligand contact to ATP.

The protein belongs to the ATPase alpha/beta chains family. As to quaternary structure, F-type ATPases have 2 components, CF(1) - the catalytic core - and CF(0) - the membrane proton channel. CF(1) has five subunits: alpha(3), beta(3), gamma(1), delta(1), epsilon(1). CF(0) has three main subunits: a(1), b(2) and c(9-12). The alpha and beta chains form an alternating ring which encloses part of the gamma chain. CF(1) is attached to CF(0) by a central stalk formed by the gamma and epsilon chains, while a peripheral stalk is formed by the delta and b chains.

Its subcellular location is the cell inner membrane. The catalysed reaction is ATP + H2O + 4 H(+)(in) = ADP + phosphate + 5 H(+)(out). In terms of biological role, produces ATP from ADP in the presence of a proton gradient across the membrane. The alpha chain is a regulatory subunit. The protein is ATP synthase subunit alpha of Pseudomonas fluorescens (strain Pf0-1).